A 467-amino-acid polypeptide reads, in one-letter code: Glutamate--tRNA ligase (467 aa).

Positions Pro9–Gly19 match the 'HIGH' region motif. Residues Lys237–Arg241 carry the 'KMSKS' region motif. Position 240 (Lys240) interacts with ATP.

It belongs to the class-I aminoacyl-tRNA synthetase family. Glutamate--tRNA ligase type 1 subfamily. Monomer.

Its subcellular location is the cytoplasm. The catalysed reaction is tRNA(Glu) + L-glutamate + ATP = L-glutamyl-tRNA(Glu) + AMP + diphosphate. Its function is as follows. Catalyzes the attachment of glutamate to tRNA(Glu) in a two-step reaction: glutamate is first activated by ATP to form Glu-AMP and then transferred to the acceptor end of tRNA(Glu). This chain is Glutamate--tRNA ligase, found in Xanthomonas euvesicatoria pv. vesicatoria (strain 85-10) (Xanthomonas campestris pv. vesicatoria).